The chain runs to 400 residues: Subtilisin-like protease 7 (400 aa).

Positions 1-20 (MGFITKAIPLALAAASVING) are cleaved as a signal peptide. A propeptide spanning residues 21–119 (AEIMETRAGV…IERDARVQIN (99 aa)) is cleaved from the precursor. The Inhibitor I9 domain maps to 36 to 118 (KYIVVMNDGM…YIERDARVQI (83 aa)). Asn-58 is a glycosylation site (N-linked (GlcNAc...) asparagine). Positions 129–400 (SWGLARVGSK…SKLINNGSGM (272 aa)) constitute a Peptidase S8 domain. Catalysis depends on charge relay system residues Asp-161 and His-192. N-linked (GlcNAc...) asparagine glycans are attached at residues Asn-222 and Asn-252. The Charge relay system role is filled by Ser-346. An N-linked (GlcNAc...) asparagine glycan is attached at Asn-396.

The protein belongs to the peptidase S8 family.

It localises to the secreted. Functionally, secreted subtilisin-like serine protease with keratinolytic activity that contributes to pathogenicity. In Trichophyton verrucosum (Cattle ringworm fungus), this protein is Subtilisin-like protease 7 (SUB7).